The chain runs to 203 residues: Glycerol-3-phosphate acyltransferase (203 aa).

Transmembrane regions (helical) follow at residues 4 to 24 (LTFA…AVLI), 68 to 88 (IPVY…FIGI), 104 to 124 (GGKG…DMGS), and 125 to 145 (FMIV…LAAI).

It belongs to the PlsY family. In terms of assembly, probably interacts with PlsX.

The protein resides in the cell inner membrane. The catalysed reaction is an acyl phosphate + sn-glycerol 3-phosphate = a 1-acyl-sn-glycero-3-phosphate + phosphate. It participates in lipid metabolism; phospholipid metabolism. Its function is as follows. Catalyzes the transfer of an acyl group from acyl-phosphate (acyl-PO(4)) to glycerol-3-phosphate (G3P) to form lysophosphatidic acid (LPA). This enzyme utilizes acyl-phosphate as fatty acyl donor, but not acyl-CoA or acyl-ACP. The chain is Glycerol-3-phosphate acyltransferase from Tolumonas auensis (strain DSM 9187 / NBRC 110442 / TA 4).